Here is a 116-residue protein sequence, read N- to C-terminus: Venom nerve growth factor (116 aa).

Cystine bridges form between Cys-14–Cys-78, Cys-56–Cys-106, and Cys-66–Cys-108. Lys-86 contacts a 1,2-diacyl-sn-glycerol.

The protein belongs to the NGF-beta family. In terms of assembly, homodimer; non-covalently linked. Interacts with NTRK1. Post-translationally, not glycosylated. In terms of tissue distribution, expressed by the venom gland.

It is found in the secreted. In terms of biological role, nerve growth factor is important for the development and maintenance of the sympathetic and sensory nervous systems. It stimulates division and differentiation of sympathetic and embryonic sensory neurons as well as basal forebrain cholinergic neurons in the brain. Its relevance in the snake venom is not clear. However, it has been shown to inhibit metalloproteinase-dependent proteolysis of platelet glycoprotein Ib alpha, suggesting a metalloproteinase inhibition to prevent metalloprotease autodigestion and/or protection against prey proteases. Binds a lipid between the two protein chains in the homodimer. The lipid-bound form promotes histamine relase from mouse mast cells, contrary to the lipid-free form. This chain is Venom nerve growth factor, found in Naja atra (Chinese cobra).